The sequence spans 234 residues: Sugar fermentation stimulation protein homolog (234 aa).

It belongs to the SfsA family.

The sequence is that of Sugar fermentation stimulation protein homolog from Shewanella sp. (strain MR-4).